Consider the following 269-residue polypeptide: Phosphonoacetaldehyde hydrolase (269 aa).

The active-site Nucleophile is Asp10. Mg(2+) contacts are provided by Asp10 and Ala12. Lys52 (schiff-base intermediate with substrate) is an active-site residue. Residue Asp186 participates in Mg(2+) binding.

This sequence belongs to the HAD-like hydrolase superfamily. PhnX family. In terms of assembly, homodimer. It depends on Mg(2+) as a cofactor.

It carries out the reaction phosphonoacetaldehyde + H2O = acetaldehyde + phosphate + H(+). In terms of biological role, involved in phosphonate degradation. In Salmonella typhimurium (strain LT2 / SGSC1412 / ATCC 700720), this protein is Phosphonoacetaldehyde hydrolase (phnX).